Consider the following 87-residue polypeptide: Large ribosomal subunit protein bL27 (87 aa).

Belongs to the bacterial ribosomal protein bL27 family.

The chain is Large ribosomal subunit protein bL27 from Wigglesworthia glossinidia brevipalpis.